The sequence spans 440 residues: Cytochrome P450 monooygenase 1 (440 aa).

Cys381 is a heme binding site.

This sequence belongs to the cytochrome P450 family. It depends on heme as a cofactor.

Its pathway is plant hormone biosynthesis; gibberellin biosynthesis. GA14 synthase; part of the gene cluster that mediates the biosynthesis of gibberellins (GAs), diterpenoids that may provide a selective advantage during infection of the preferred host plant, rice. Gibberellins (GAs) are diterpenoids and are synthesized via the mevalonate pathway. Biosynthesis of the major metabolite GA3 (gibberellic acid) from geranylgeranyl diphosphate (GGPP) requires 13 steps. The GGPP produced by the geranylgeranyl diphosphate synthase GGS2 is converted to ent-kaurene via ent-copalyldiphosphate in a two-step cyclization reaction performed by the bifunctional ent-copalyl diphosphate synthase/ent-kaurene synthase enzyme (CPS/KS). Ent-Kaurene is metabolized to GAs by a series of oxidation reactions catalyzed by cytochrome P450 monooxygenases. Cytochrome P450 monooxygenase P450-4 is an ent-kaurene oxidase that catalyzes the three oxidation steps between ent-kaurene and ent-kaurenoic acid. The highly multifunctional cytochrome P450 monooxygenase P450-1 then catalyzes four steps involving oxidation at two carbon atoms, in the main pathway from ent-kaurenoic acid to GA14 via GA12-aldehyde as well as producing kaurenolides and fujenoic acids as by-products. The cytochrome P450 monooxygenase P450-2 then converts GA14 to GA4 by removal of C-20. GA4 is further converted to GA7 by the GA4 desaturase DES via 1,2-desaturation before cytochrome P450 monooxygenase P450-3, a 13-hydroxylase, hydroxylates GA7 to GA3, the final product of the GA-biosynthetic pathway. In Gibberella fujikuroi (strain CBS 195.34 / IMI 58289 / NRRL A-6831) (Bakanae and foot rot disease fungus), this protein is Cytochrome P450 monooygenase 1.